The primary structure comprises 199 residues: Fe/S biogenesis protein NfuA (199 aa).

Residues C151 and C154 each coordinate [4Fe-4S] cluster.

The protein belongs to the NfuA family. As to quaternary structure, homodimer. It depends on [4Fe-4S] cluster as a cofactor.

Its function is as follows. Involved in iron-sulfur cluster biogenesis. Binds a 4Fe-4S cluster, can transfer this cluster to apoproteins, and thereby intervenes in the maturation of Fe/S proteins. Could also act as a scaffold/chaperone for damaged Fe/S proteins. This Xanthomonas oryzae pv. oryzae (strain PXO99A) protein is Fe/S biogenesis protein NfuA.